We begin with the raw amino-acid sequence, 329 residues long: Dapdiamide synthesis protein DdaC (329 aa).

It depends on Fe(2+) as a cofactor.

The protein operates within antibiotic biosynthesis. Functionally, involved in dapdiamide antibiotics biosynthesis. Catalyzes the alpha-ketoglutarate-dependent epoxidation of the covalently bound N-beta-fumaramoyl-DAP-S-DdaD to generate N-beta-epoxysuccinamoyl-DAP in thioester linkage to DdaD. This chain is Dapdiamide synthesis protein DdaC, found in Enterobacter agglomerans (Erwinia herbicola).